The chain runs to 328 residues: MDLNTILIIVGIVALVALIVHGLWSNRREKSKYFDKANKFDRTSLTSRSHTQEEMVQPNNISPNTYVENGHTPIPQPTTEKLPSEAELIDYRQSDKSVDDIKISIPNTQPIYDMGNHRSEPIQPTQPQYDMPTANNVASMTLEQLEAQSQNVGFNGINSSSPELRVQLAELSHEEHQVDYNLSFNEPKAETTAHPKQTTGYIQLYLIPKSSEEFNGAKLVQALENLGFILGKDEMYHRHLDLSVASPVLFSVANLEQPGTFNAYNLAEFNTIGIVLFMQLPSPGNNLANLRMMMRAAHTLAEDLQGVILTEEQEIFDANAEQAYLARV.

Over 1–4 the chain is Periplasmic; that stretch reads MDLN. A helical transmembrane segment spans residues 5–25; the sequence is TILIIVGIVALVALIVHGLWS. Residues 26-328 are Cytoplasmic-facing; that stretch reads NRREKSKYFD…NAEQAYLARV (303 aa). Residues 44-82 form a disordered region; the sequence is SLTSRSHTQEEMVQPNNISPNTYVENGHTPIPQPTTEKL. Residues 57–67 show a composition bias toward polar residues; the sequence is QPNNISPNTYV.

Belongs to the ZipA family. As to quaternary structure, interacts with FtsZ via their C-terminal domains.

Its subcellular location is the cell inner membrane. Functionally, essential cell division protein that stabilizes the FtsZ protofilaments by cross-linking them and that serves as a cytoplasmic membrane anchor for the Z ring. Also required for the recruitment to the septal ring of downstream cell division proteins. This Haemophilus influenzae (strain ATCC 51907 / DSM 11121 / KW20 / Rd) protein is Cell division protein ZipA.